The sequence spans 200 residues: Holliday junction branch migration complex subunit RuvA (200 aa).

Residues 1–64 (MIAHLTGLVG…EDAFLLYGFA (64 aa)) are domain I. The segment at 65 to 143 (EAAERDWFRL…RMPAGPGVTI (79 aa)) is domain II. Residues 144-147 (AAPP) are flexible linker. Residues 148-200 (ASGGVEADALLALAGLGFRRAEAQPVVGRILARLDGKADLDVVIRESLRELAR) form a domain III region.

It belongs to the RuvA family. Homotetramer. Forms an RuvA(8)-RuvB(12)-Holliday junction (HJ) complex. HJ DNA is sandwiched between 2 RuvA tetramers; dsDNA enters through RuvA and exits via RuvB. An RuvB hexamer assembles on each DNA strand where it exits the tetramer. Each RuvB hexamer is contacted by two RuvA subunits (via domain III) on 2 adjacent RuvB subunits; this complex drives branch migration. In the full resolvosome a probable DNA-RuvA(4)-RuvB(12)-RuvC(2) complex forms which resolves the HJ.

Its subcellular location is the cytoplasm. The RuvA-RuvB-RuvC complex processes Holliday junction (HJ) DNA during genetic recombination and DNA repair, while the RuvA-RuvB complex plays an important role in the rescue of blocked DNA replication forks via replication fork reversal (RFR). RuvA specifically binds to HJ cruciform DNA, conferring on it an open structure. The RuvB hexamer acts as an ATP-dependent pump, pulling dsDNA into and through the RuvAB complex. HJ branch migration allows RuvC to scan DNA until it finds its consensus sequence, where it cleaves and resolves the cruciform DNA. This Gluconacetobacter diazotrophicus (strain ATCC 49037 / DSM 5601 / CCUG 37298 / CIP 103539 / LMG 7603 / PAl5) protein is Holliday junction branch migration complex subunit RuvA.